Reading from the N-terminus, the 213-residue chain is Ephrin-A2 (213 aa).

The signal sequence occupies residues 1–24 (MAPAQRPLLPLLLLLLPLPPPPFA). Positions 34–174 (SDRYAVYWNR…RLKVYVRPTN (141 aa)) constitute an Ephrin RBD domain. A glycan (N-linked (GlcNAc...) asparagine) is linked at Asn-42. 2 cysteine pairs are disulfide-bonded: Cys-73–Cys-114 and Cys-102–Cys-163. 2 N-linked (GlcNAc...) asparagine glycosylation sites follow: Asn-174 and Asn-188. A lipid anchor (GPI-anchor amidated asparagine) is attached at Asn-188. Positions 189–213 (NSCSSPGGCRLFLSTIPVLWTLLGS) are cleaved as a propeptide — removed in mature form.

Belongs to the ephrin family. In terms of assembly, binds to the receptor tyrosine kinases EPHA3, EPHA4 and EPHA5. Interacts with EPHA8; activates EPHA8.

The protein localises to the cell membrane. Functionally, cell surface GPI-bound ligand for Eph receptors, a family of receptor tyrosine kinases which are crucial for migration, repulsion and adhesion during neuronal, vascular and epithelial development. Binds promiscuously Eph receptors residing on adjacent cells, leading to contact-dependent bidirectional signaling into neighboring cells. The signaling pathway downstream of the receptor is referred to as forward signaling while the signaling pathway downstream of the ephrin ligand is referred to as reverse signaling. With the EPHA2 receptor may play a role in bone remodeling through regulation of osteoclastogenesis and osteoblastogenesis. The chain is Ephrin-A2 (EFNA2) from Homo sapiens (Human).